Consider the following 372-residue polypeptide: Histidine protein methyltransferase 1 homolog (372 aa).

2 disordered regions span residues 30–55 (SKELSVSESQKGEERDRKCSAEQFDL) and 68–103 (NAAPSQDTDSPLSAASSSRNLEPHGKQPSLRAAKEH). A compositionally biased stretch (basic and acidic residues) spans 39–49 (QKGEERDRKCS). Over residues 70 to 87 (APSQDTDSPLSAASSSRN) the composition is skewed to polar residues. S72 and S77 each carry phosphoserine. H154 is subject to Tele-methylhistidine; by autocatalysis. Residues 168–172 (IWECT), G195, and 216–218 (QDY) each bind S-adenosyl-L-methionine. The Nuclear localization signal motif lies at 247 to 253 (PDVKRCR). S-adenosyl-L-methionine contacts are provided by residues 268 to 270 (GEW) and S293.

The protein belongs to the methyltransferase superfamily. METTL18 family. As to quaternary structure, interacts with GRWD1 and members of the heat shock protein 90 and 70 families; these proteins may possibly be methylation substrates for the enzyme. Monomethylated at His-154 through automethylation. Automethylation at His-154 positively regulates the methyltransferase activity toward RPL3. Probably methylated on other residues.

It is found in the cytoplasm. The protein localises to the cytosol. It localises to the nucleus. Its subcellular location is the nucleolus. It catalyses the reaction L-histidyl-[protein] + S-adenosyl-L-methionine = N(tele)-methyl-L-histidyl-[protein] + S-adenosyl-L-homocysteine + H(+). Its function is as follows. Protein-L-histidine N-tele-methyltransferase that specifically monomethylates RPL3, thereby regulating translation elongation. Histidine methylation of RPL3 regulates translation elongation by slowing ribosome traversal on tyrosine codons: slower elongation provides enough time for proper folding of synthesized proteins and prevents cellular aggregation of tyrosine-rich proteins. The polypeptide is Histidine protein methyltransferase 1 homolog (Homo sapiens (Human)).